A 207-amino-acid polypeptide reads, in one-letter code: 3-demethoxyubiquinol 3-hydroxylase (207 aa).

Glutamate 56, glutamate 86, histidine 89, glutamate 138, glutamate 170, and histidine 173 together coordinate Fe cation.

The protein belongs to the COQ7 family. Fe cation serves as cofactor.

It localises to the cell membrane. It carries out the reaction a 5-methoxy-2-methyl-3-(all-trans-polyprenyl)benzene-1,4-diol + AH2 + O2 = a 3-demethylubiquinol + A + H2O. Its pathway is cofactor biosynthesis; ubiquinone biosynthesis. Catalyzes the hydroxylation of 2-nonaprenyl-3-methyl-6-methoxy-1,4-benzoquinol during ubiquinone biosynthesis. The chain is 3-demethoxyubiquinol 3-hydroxylase from Cupriavidus pinatubonensis (strain JMP 134 / LMG 1197) (Cupriavidus necator (strain JMP 134)).